Here is a 347-residue protein sequence, read N- to C-terminus: Phosphoribosylformylglycinamidine cyclo-ligase (347 aa).

Belongs to the AIR synthase family.

The protein resides in the cytoplasm. It carries out the reaction 2-formamido-N(1)-(5-O-phospho-beta-D-ribosyl)acetamidine + ATP = 5-amino-1-(5-phospho-beta-D-ribosyl)imidazole + ADP + phosphate + H(+). Its pathway is purine metabolism; IMP biosynthesis via de novo pathway; 5-amino-1-(5-phospho-D-ribosyl)imidazole from N(2)-formyl-N(1)-(5-phospho-D-ribosyl)glycinamide: step 2/2. The sequence is that of Phosphoribosylformylglycinamidine cyclo-ligase from Prochlorococcus marinus (strain MIT 9312).